Here is an 828-residue protein sequence, read N- to C-terminus: Periplasmic nitrate reductase (828 aa).

Positions 1–33 (MKLSRRDFMKANAAVAAAAAAGLTIPTVVQAAA) form a signal peptide, tat-type signal. Residues 39 to 95 (IKWDKAPCRFCGTGCGVLVGTQNGRIVASQGDPEAAVNRGLSCIKGYFLPKIMYGKD) form the 4Fe-4S Mo/W bis-MGD-type domain. [4Fe-4S] cluster is bound by residues Cys46, Cys49, Cys53, and Cys81. Mo-bis(molybdopterin guanine dinucleotide)-binding positions include Lys83, Gln150, Asn175, Cys179, 212–219 (WGSNMAEM), 243–247 (STFEH), 262–264 (QTD), Met372, Gln376, Asn482, 508–509 (SD), Lys531, Asp558, and 718–727 (TGRVLEHWHT). Phe794 serves as a coordination point for substrate. The Mo-bis(molybdopterin guanine dinucleotide) site is built by Asn802 and Lys819.

This sequence belongs to the prokaryotic molybdopterin-containing oxidoreductase family. NasA/NapA/NarB subfamily. In terms of assembly, component of the periplasmic nitrate reductase NapAB complex composed of NapA and NapB. Requires [4Fe-4S] cluster as cofactor. Mo-bis(molybdopterin guanine dinucleotide) serves as cofactor. Predicted to be exported by the Tat system. The position of the signal peptide cleavage has not been experimentally proven.

The protein localises to the periplasm. It catalyses the reaction 2 Fe(II)-[cytochrome] + nitrate + 2 H(+) = 2 Fe(III)-[cytochrome] + nitrite + H2O. Catalytic subunit of the periplasmic nitrate reductase complex NapAB. Receives electrons from NapB and catalyzes the reduction of nitrate to nitrite. The chain is Periplasmic nitrate reductase from Serratia proteamaculans (strain 568).